Here is a 229-residue protein sequence, read N- to C-terminus: Secretory carrier-associated membrane protein 4 (229 aa).

The Cytoplasmic segment spans residues 1 to 39; it reads MSEKENNFPPLPKFIPVKPCFYQNFSDEIPVEHQVLVKR. The next 4 membrane-spanning stretches (helical) occupy residues 40 to 60, 61 to 81, 105 to 125, and 149 to 169; these read IYRL…ACLA, WWIG…LLLF, FMAF…QAIG, and VVML…AIAI. Residues 170-229 are Cytoplasmic-facing; it reads MKVHRIYRGAGGSFQKAQTEWNTGTWRNPPSREAQYNNFSGNSLPEYPTVPSYPGSGQWP. At Thr-194 the chain carries Phosphothreonine. The segment at 208–229 is disordered; it reads FSGNSLPEYPTVPSYPGSGQWP.

It belongs to the SCAMP family.

Its subcellular location is the membrane. In terms of biological role, probably involved in membrane protein trafficking. This is Secretory carrier-associated membrane protein 4 (SCAMP4) from Pongo abelii (Sumatran orangutan).